Reading from the N-terminus, the 350-residue chain is Twinfilin-1 (350 aa).

The residue at position 2 (S2) is an N-acetylserine. The ADF-H 1 domain occupies 2–139 (SHQTGIQASE…SLHGYKKYLL (138 aa)). S143 and S277 each carry phosphoserine. The ADF-H 2 domain maps to 175 to 313 (LQGVAFPISR…TADFLYEEVH (139 aa)). Y309 is subject to Phosphotyrosine. The disordered stretch occupies residues 316–350 (QHAHKQSFAKPKGPAGKRGIRRLIRGPAETEATTD). T349 carries the phosphothreonine modification.

The protein belongs to the actin-binding proteins ADF family. Twinfilin subfamily. In terms of assembly, interacts with G-actin; ADP-actin form and capping protein (CP). May also be able to interact with TWF2 and phosphoinositides, PI(4,5)P2. When bound to PI(4,5)P2, it is down-regulated. Interacts with ACTG1. Phosphorylated on serine and threonine residues. Expressed at high levels in the colon, testis, ovary, prostate and lung. Expressed at lower levels in the brain, bladder and heart. Not detected in liver.

The protein resides in the cytoplasm. It localises to the cytoskeleton. Its function is as follows. Actin-binding protein involved in motile and morphological processes. Inhibits actin polymerization, likely by sequestering G-actin. By capping the barbed ends of filaments, it also regulates motility. Seems to play an important role in clathrin-mediated endocytosis and distribution of endocytic organelles. The chain is Twinfilin-1 (TWF1) from Homo sapiens (Human).